The primary structure comprises 746 residues: Taurocyamine kinase (746 aa).

Approximate repeat units follow at residues Met-31 to Val-393 and Met-394 to His-705. Positions Ser-35–Lys-116 constitute a Phosphagen kinase N-terminal 1 domain. Positions Leu-146–Leu-382 constitute a Phosphagen kinase C-terminal 1 domain. ATP contacts are provided by residues Ser-149–Arg-153, His-212, and Arg-256. Residue Cys-298 is part of the active site. ATP-binding positions include Arg-307–His-311 and Arg-335–Glu-340. The Phosphagen kinase N-terminal 2 domain maps to Pro-398–Gly-479. In terms of domain architecture, Phosphagen kinase C-terminal 2 spans Phe-509 to Leu-746. ATP contacts are provided by residues Ser-512–Arg-516, His-575, and Arg-619. Residue Cys-661 is part of the active site. Residues Arg-670–Leu-674 and Arg-699–Glu-704 contribute to the ATP site.

It belongs to the ATP:guanido phosphotransferase family. It depends on Mg(2+) as a cofactor.

It catalyses the reaction taurocyamine + ATP = N-phosphotaurocyamine + ADP + H(+). This family of enzymes reversibly catalyzes the transfer of phosphate between ATP and various phosphogens (e.g. creatine phosphate). In Schistosoma mansoni (Blood fluke), this protein is Taurocyamine kinase.